Here is a 302-residue protein sequence, read N- to C-terminus: Deoxyribonuclease-1-like 1 (302 aa).

Residues 1–18 form the signal peptide; sequence MHYPTALLFLILANGAQA. Active-site residues include Glu97 and His148. A disulfide bridge connects residues Cys187 and Cys224. A glycan (N-linked (GlcNAc...) asparagine) is linked at Asn261.

Belongs to the DNase I family. Highest levels in skeletal and cardiac muscles. Detectable in all other tissues tested except brain.

The protein localises to the endoplasmic reticulum. The polypeptide is Deoxyribonuclease-1-like 1 (DNASE1L1) (Homo sapiens (Human)).